The primary structure comprises 209 residues: Uracil phosphoribosyltransferase (209 aa).

Residues Arg-79, Arg-104, and Asp-131 to Ser-139 contribute to the 5-phospho-alpha-D-ribose 1-diphosphate site. Uracil contacts are provided by residues Ile-194 and Gly-199 to Ala-201. Residue Asp-200 participates in 5-phospho-alpha-D-ribose 1-diphosphate binding.

The protein belongs to the UPRTase family. Mg(2+) serves as cofactor.

The catalysed reaction is UMP + diphosphate = 5-phospho-alpha-D-ribose 1-diphosphate + uracil. Its pathway is pyrimidine metabolism; UMP biosynthesis via salvage pathway; UMP from uracil: step 1/1. Its activity is regulated as follows. Allosterically activated by GTP. Its function is as follows. Catalyzes the conversion of uracil and 5-phospho-alpha-D-ribose 1-diphosphate (PRPP) to UMP and diphosphate. The polypeptide is Uracil phosphoribosyltransferase (Rhodococcus jostii (strain RHA1)).